Consider the following 192-residue polypeptide: CASP-like protein 2U1 (192 aa).

Residues 1–11 lie on the Cytoplasmic side of the membrane; the sequence is MASRKQGAREG. The chain crosses the membrane as a helical span at residues 12-32; sequence LWSMGVRLLTTLLCITSLILL. At 33–58 the chain is on the extracellular side; the sequence is LKAKQTVRRALGLGYIAQTVKYSDTS. The chain crosses the membrane as a helical span at residues 59–79; it reads GFIYLVYINILVAAYGLIVFV. Residues 80 to 96 lie on the Cytoplasmic side of the membrane; sequence SLIPSALGKSCSGKCSR. Residues 97-117 traverse the membrane as a helical segment; that stretch reads WTIFVLDQVFAYVLLSAVSAA. Residues 118–145 lie on the Extracellular side of the membrane; sequence TEVLYLADKGMSKTQWEALCPTYGFFCH. The chain crosses the membrane as a helical span at residues 146 to 166; that stretch reads MVSASVAIGSVAVVLLAVLSV. The Cytoplasmic portion of the chain corresponds to 167–192; sequence SSAQSLFHNFYTRALYTTKMRHSSLT.

This sequence belongs to the Casparian strip membrane proteins (CASP) family. As to quaternary structure, homodimer and heterodimers.

The protein resides in the cell membrane. The protein is CASP-like protein 2U1 of Adiantum capillus-veneris (Maidenhair fern).